Reading from the N-terminus, the 502-residue chain is NAD(P)H-quinone oxidoreductase subunit 2, chloroplastic (502 aa).

The next 14 membrane-spanning stretches (helical) occupy residues valine 15 to phenylalanine 35, valine 42 to tryptophan 62, leucine 79 to isoleucine 99, threonine 108 to glycine 128, isoleucine 132 to tyrosine 152, leucine 167 to leucine 187, leucine 210 to alanine 230, valine 253 to isoleucine 275, tryptophan 278 to isoleucine 298, leucine 307 to isoleucine 327, leucine 334 to phenylalanine 354, isoleucine 375 to glycine 395, leucine 413 to isoleucine 433, and isoleucine 468 to isoleucine 488.

The protein belongs to the complex I subunit 2 family. In terms of assembly, NDH is composed of at least 16 different subunits, 5 of which are encoded in the nucleus.

The protein resides in the plastid. The protein localises to the chloroplast thylakoid membrane. It carries out the reaction a plastoquinone + NADH + (n+1) H(+)(in) = a plastoquinol + NAD(+) + n H(+)(out). The enzyme catalyses a plastoquinone + NADPH + (n+1) H(+)(in) = a plastoquinol + NADP(+) + n H(+)(out). NDH shuttles electrons from NAD(P)H:plastoquinone, via FMN and iron-sulfur (Fe-S) centers, to quinones in the photosynthetic chain and possibly in a chloroplast respiratory chain. The immediate electron acceptor for the enzyme in this species is believed to be plastoquinone. Couples the redox reaction to proton translocation, and thus conserves the redox energy in a proton gradient. This chain is NAD(P)H-quinone oxidoreductase subunit 2, chloroplastic, found in Mesostigma viride (Green alga).